Consider the following 388-residue polypeptide: Angiopoietin-related protein 5 (388 aa).

The first 25 residues, 1-25 (MMSPSQASLLFLNVCIFICGEAVQG), serve as a signal peptide directing secretion. N-linked (GlcNAc...) asparagine glycosylation occurs at Asn53. Residues 98 to 123 (LRNMMDEQQASLDYLSNQVNELMNRV) adopt a coiled-coil conformation. The 243-residue stretch at 141–383 (RPVQSHGLDC…SVSMKIRRMY (243 aa)) folds into the Fibrinogen C-terminal domain. A glycan (N-linked (GlcNAc...) asparagine) is linked at Asn238. 2 disulfides stabilise this stretch: Cys310-Cys314 and Cys324-Cys338. A glycan (N-linked (GlcNAc...) asparagine) is linked at Asn329.

In terms of tissue distribution, mainly expressed in adult heart.

The protein resides in the secreted. This chain is Angiopoietin-related protein 5 (ANGPTL5), found in Homo sapiens (Human).